The following is a 185-amino-acid chain: Bcl-2-modifying factor (185 aa).

The interval 1–28 (MEPPQCVEELEDDVFQPEDGEPGTQPGS) is disordered. Acidic residues predominate over residues 8–21 (EELEDDVFQPEDGE). The tract at residues 67–75 (DKATQTLSP) is interaction with DLC2. Positions 134–148 (IARKLQCIADQFHRL) match the BH3 motif.

Belongs to the Bcl-2 family. As to quaternary structure, interacts with MCL1, BCL2, BCL2L1/BCL-Xl, BCL2A1 and BCL2L2/BCL-w. Interacts with the myosin V actin motor complex through its binding to DLC2.

May play a role in apoptosis. This is Bcl-2-modifying factor (Bmf) from Rattus norvegicus (Rat).